Consider the following 244-residue polypeptide: Phosphoribosyl isomerase A (244 aa).

The Proton acceptor role is filled by Asp10. Residue Asp129 is the Proton donor of the active site.

Belongs to the HisA/HisF family.

It localises to the cytoplasm. The catalysed reaction is 1-(5-phospho-beta-D-ribosyl)-5-[(5-phospho-beta-D-ribosylamino)methylideneamino]imidazole-4-carboxamide = 5-[(5-phospho-1-deoxy-D-ribulos-1-ylimino)methylamino]-1-(5-phospho-beta-D-ribosyl)imidazole-4-carboxamide. The enzyme catalyses N-(5-phospho-beta-D-ribosyl)anthranilate = 1-(2-carboxyphenylamino)-1-deoxy-D-ribulose 5-phosphate. It functions in the pathway amino-acid biosynthesis; L-histidine biosynthesis; L-histidine from 5-phospho-alpha-D-ribose 1-diphosphate: step 4/9. Its pathway is amino-acid biosynthesis; L-tryptophan biosynthesis; L-tryptophan from chorismate: step 3/5. Involved in both the histidine and tryptophan biosynthetic pathways. In Mycobacterium tuberculosis (strain CDC 1551 / Oshkosh), this protein is Phosphoribosyl isomerase A (priA).